The primary structure comprises 469 residues: Glutamine synthetase (469 aa).

Positions 14–99 constitute a GS beta-grasp domain; the sequence is NDVKFVDLRF…VCDILDPVSG (86 aa). A GS catalytic domain is found at 106–469; sequence RRGTAKKAEA…PVEYDMYYSA (364 aa). Mg(2+)-binding residues include Glu131 and Glu133. Glu209 is an ATP binding site. The Mg(2+) site is built by Glu214 and Asp221. Residues 265–266 and Gly266 contribute to the L-glutamate site; that span reads NG. His270 provides a ligand contact to Mg(2+). Residues 272–274 and Ser274 each bind ATP; that span reads HQS. Residues Arg322, Glu328, and Arg340 each coordinate L-glutamate. Arg340, Arg345, and Lys353 together coordinate ATP. Residue Glu358 coordinates Mg(2+). Arg360 lines the L-glutamate pocket. Position 398 is an O-AMP-tyrosine (Tyr398).

It belongs to the glutamine synthetase family. As to quaternary structure, oligomer of 12 subunits arranged in the form of two hexameric ring. Requires Mg(2+) as cofactor.

The protein resides in the cytoplasm. It catalyses the reaction L-glutamate + NH4(+) + ATP = L-glutamine + ADP + phosphate + H(+). With respect to regulation, the activity of this enzyme could be controlled by adenylation under conditions of abundant glutamine. In terms of biological role, catalyzes the ATP-dependent biosynthesis of glutamine from glutamate and ammonia. This Rhizobium leguminosarum bv. viciae protein is Glutamine synthetase.